The primary structure comprises 575 residues: DNA-directed RNA polymerase subunit beta' (575 aa).

Belongs to the RNA polymerase beta' chain family. In terms of assembly, in plastids the minimal PEP RNA polymerase catalytic core is composed of four subunits: alpha, beta, beta', and beta''. When a (nuclear-encoded) sigma factor is associated with the core the holoenzyme is formed, which can initiate transcription.

The protein resides in the plastid. It localises to the apicoplast. It catalyses the reaction RNA(n) + a ribonucleoside 5'-triphosphate = RNA(n+1) + diphosphate. DNA-dependent RNA polymerase catalyzes the transcription of DNA into RNA using the four ribonucleoside triphosphates as substrates. This is DNA-directed RNA polymerase subunit beta' (rpoC1) from Plasmodium falciparum (isolate 3D7).